Consider the following 283-residue polypeptide: MATKLQDENTPCLAATPSEPRPTVLVFDSGVGGLSVYDEIRRLLPDLHYIYAFDNVAFPYGEKSETFIVERVVEIVTAVQQRYPLSLAVIACNTASTVSLPALREKFAFPVVGVVPAIKPAARLTANGVVGLLATRATVKRPYTHELIARFANECQIAMLGSAELVELAEAKLHGDSVSLEELRRILRPWLRMPEPPDTVVLGCTHFPLLRDELLQVLPEGTRLVDSGAAIARRTAWLLEHEAPDAKSTDANIAYCMAMTPGAEQLLPVLQRYGFETLEKLAV.

Residues 28-29 and 60-61 contribute to the substrate site; these read DS and YG. Cysteine 92 (proton donor/acceptor) is an active-site residue. Substrate is bound at residue 93 to 94; sequence NT. Cysteine 204 serves as the catalytic Proton donor/acceptor. A substrate-binding site is contributed by 205 to 206; the sequence is TH.

The protein belongs to the aspartate/glutamate racemases family.

The catalysed reaction is L-glutamate = D-glutamate. It functions in the pathway cell wall biogenesis; peptidoglycan biosynthesis. Functionally, provides the (R)-glutamate required for cell wall biosynthesis. This is Glutamate racemase from Salmonella choleraesuis (strain SC-B67).